The primary structure comprises 1339 residues: Tuberous sclerosis 2 protein homolog (1339 aa).

Residue S1036 is modified to Phosphoserine. The region spanning 1109-1303 (ILANTNPSED…AERLRQLKRL (195 aa)) is the Rap-GAP domain.

In terms of assembly, interacts with tsc1.

The protein resides in the cytoplasm. It localises to the nucleus. In terms of biological role, together with tsc1, required for uptake of various amino acids from the environment and for proper conjugation. Involved in induction of gene expression of permeases and genes required for meiosis upon nitrogen starvation. May act as a GTPase-activating protein (GAP) for the small GTPase rhb1. The sequence is that of Tuberous sclerosis 2 protein homolog (tsc2) from Schizosaccharomyces pombe (strain 972 / ATCC 24843) (Fission yeast).